Here is a 66-residue protein sequence, read N- to C-terminus: Large ribosomal subunit protein bL35 (66 aa).

A compositionally biased stretch (basic residues) spans 1–16 (MPKQKTHRASAKRFKR). Positions 1–21 (MPKQKTHRASAKRFKRTGSGG) are disordered.

Belongs to the bacterial ribosomal protein bL35 family.

The sequence is that of Large ribosomal subunit protein bL35 from Streptococcus gordonii (strain Challis / ATCC 35105 / BCRC 15272 / CH1 / DL1 / V288).